Here is a 514-residue protein sequence, read N- to C-terminus: Glucose-6-phosphate 1-dehydrogenase 2 (514 aa).

Residues R69 and K176 each contribute to the NADP(+) site. Substrate-binding residues include H206, K210, E244, and D263. The Proton acceptor role is filled by H268. Residue K366 participates in substrate binding.

It belongs to the glucose-6-phosphate dehydrogenase family.

It catalyses the reaction D-glucose 6-phosphate + NADP(+) = 6-phospho-D-glucono-1,5-lactone + NADPH + H(+). Its pathway is carbohydrate degradation; pentose phosphate pathway; D-ribulose 5-phosphate from D-glucose 6-phosphate (oxidative stage): step 1/3. Its function is as follows. Catalyzes the oxidation of glucose 6-phosphate to 6-phosphogluconolactone. The chain is Glucose-6-phosphate 1-dehydrogenase 2 from Mycobacterium bovis (strain ATCC BAA-935 / AF2122/97).